Consider the following 155-residue polypeptide: MKVEIDSFSGAKIYPGRGTLFVRGDSKIFRFQNSKSASLFKQRKNPRRIAWTVLFRKHHKKGITEEVAKKRSRKTVKAQRPITGASLDLIKERRSLKPEVRKANREEKLKANKEKKKAEKAARKAEKAKSAGTQSSKFSKQQAKGAFQKVAATSR.

Serine 7 bears the Phosphoserine mark. Residues 66–155 are disordered; the sequence is EVAKKRSRKT…AFQKVAATSR (90 aa). A compositionally biased stretch (basic and acidic residues) spans 89–129; the sequence is LIKERRSLKPEVRKANREEKLKANKEKKKAEKAARKAEKAK. Residues 131–142 are compositionally biased toward polar residues; sequence AGTQSSKFSKQQ.

It belongs to the eukaryotic ribosomal protein eL24 family. In terms of assembly, component of the large ribosomal subunit (LSU). Mature yeast ribosomes consist of a small (40S) and a large (60S) subunit. The 40S small subunit contains 1 molecule of ribosomal RNA (18S rRNA) and 33 different proteins (encoded by 57 genes). The large 60S subunit contains 3 rRNA molecules (25S, 5.8S and 5S rRNA) and 46 different proteins (encoded by 81 genes).

It localises to the cytoplasm. In terms of biological role, component of the ribosome, a large ribonucleoprotein complex responsible for the synthesis of proteins in the cell. The small ribosomal subunit (SSU) binds messenger RNAs (mRNAs) and translates the encoded message by selecting cognate aminoacyl-transfer RNA (tRNA) molecules. The large subunit (LSU) contains the ribosomal catalytic site termed the peptidyl transferase center (PTC), which catalyzes the formation of peptide bonds, thereby polymerizing the amino acids delivered by tRNAs into a polypeptide chain. The nascent polypeptides leave the ribosome through a tunnel in the LSU and interact with protein factors that function in enzymatic processing, targeting, and the membrane insertion of nascent chains at the exit of the ribosomal tunnel. The sequence is that of Large ribosomal subunit protein eL24A from Saccharomyces cerevisiae (strain ATCC 204508 / S288c) (Baker's yeast).